Here is a 367-residue protein sequence, read N- to C-terminus: MAQKQQTLHQQRPFSSSPRSYSSISNRPIFLLSRNGLLLVLLALFLLLGVFLPWPGSPLLLFPNKVSSPSYASSLSPHAKSEWRNYTLAQAAKFVATNGTVIVCAVSSPFLPFLNNWLISVSRQKHQEKVLVIAEDYITLYKVNEKWPGHAVLIPPALDSKTAYSFGSQGFFNFTARRPQHLLQILELGYNVMYNDVDMVWLQDPFQYLEGSHDAYFTDDMPQIKPLNHSHDLPAPDQNGETYICSCMIYLRPTNGAKLLMKKWSEELQSQAWSESIRFKANDQPAFNLALNKTAHQVDLYLLSQVAFPTGGLYFNDAAWVKETKGKHVIVHNNYIIGYDRKMRRFQDYGLWLVDDHALESPLGKLQ.

The segment covering M1–Q10 has biased composition (polar residues). The segment at M1–Y21 is disordered. At M1–N35 the chain is on the cytoplasmic side. Residues R12–Y21 are compositionally biased toward low complexity. A helical; Signal-anchor for type II membrane protein transmembrane segment spans residues G36–G56. Residues S57–Q367 lie on the Lumenal side of the membrane. 3 N-linked (GlcNAc...) asparagine glycosylation sites follow: N85, N98, and N173. The DXD motif signature appears at D196–D198. Residues N228 and N292 are each glycosylated (N-linked (GlcNAc...) asparagine).

The protein belongs to the glycosyltransferase 77 family. Mn(2+) is required as a cofactor. Mg(2+) serves as cofactor. Glycosylated. Expressed in roots, rosette leaves, stems and flowers.

It localises to the golgi apparatus membrane. Its function is as follows. Catalyzes the transfer of D-xylose from UDP-alpha-D-xylose onto L-fucose. Probably involved in the biosynthesis of rhamnogalacturonan II (RG-II) through xylosylation of the internal fucose moiety of the A-chain of RG-II, a structurally complex pectic polysaccharide of the primary cell wall. RG-II is essential for the cell wall integrity of rapidly growing tissues such as roots and pollen tube growth and elongation. In Arabidopsis thaliana (Mouse-ear cress), this protein is UDP-D-xylose:L-fucose alpha-1,3-D-xylosyltransferase.